The primary structure comprises 884 residues: Coatomer subunit gamma-1 (884 aa).

5 HEAT repeats span residues 65–100 (VEATEVFFAVTKLFQSKDAGLRRLVYLMIKELSPSS), 101–138 (DEVIIVTSSLMKDMNSKTDMYRANAIRVLCRIIDGTLL), 286–323 (RELAPAITVLQLFLSSSKPVLRFAAVRTLNKVAMTRPL), 325–357 (VTNCNVDLESLMSDQNRSIATLAITTLLKTGNE), and 358–395 (SSVDRLMKQITNFMSDIADEFKIVVVEAIRSLCLKFPL). The segment at 592–612 (QPLQEKKAPGKKPPAGAPAPA) is disordered. Positions 602-612 (KKPPAGAPAPA) are enriched in pro residues.

Belongs to the COPG family. In terms of assembly, oligomeric complex that consists of at least the alpha, beta, beta', gamma, delta, epsilon and zeta subunits.

It localises to the cytoplasm. It is found in the golgi apparatus membrane. The protein resides in the cytoplasmic vesicle. The protein localises to the COPI-coated vesicle membrane. The coatomer is a cytosolic protein complex that binds to dilysine motifs and reversibly associates with Golgi non-clathrin-coated vesicles, which further mediate biosynthetic protein transport from the ER, via the Golgi up to the trans Golgi network. Coatomer complex is required for budding from Golgi membranes, and is essential for the retrograde Golgi-to-ER transport of dilysine-tagged proteins. This is Coatomer subunit gamma-1 from Oryza sativa subsp. japonica (Rice).